We begin with the raw amino-acid sequence, 626 residues long: DNA primase (626 aa).

The CHC2-type zinc finger occupies 39-63 (CPFHGEKTPSFSVSPEKQIFHCFGC). Positions 264 to 346 (EEITLMEGFM…DVFVLQLPAG (83 aa)) constitute a Toprim domain. 3 residues coordinate Mg(2+): Glu270, Asp314, and Asp316.

The protein belongs to the DnaG primase family. Monomer. Interacts with DnaB. Zn(2+) is required as a cofactor. Requires Mg(2+) as cofactor.

The catalysed reaction is ssDNA + n NTP = ssDNA/pppN(pN)n-1 hybrid + (n-1) diphosphate.. Functionally, RNA polymerase that catalyzes the synthesis of short RNA molecules used as primers for DNA polymerase during DNA replication. The protein is DNA primase of Listeria monocytogenes serovar 1/2a (strain ATCC BAA-679 / EGD-e).